A 419-amino-acid polypeptide reads, in one-letter code: E3 ubiquitin-protein ligase RNFT1 (419 aa).

The interval 1–120 (MKLRAQFDRG…SGESDLESGE (120 aa)) is disordered. Composition is skewed to polar residues over residues 31–44 (EPSSREGNGLSLTL) and 72–82 (GSSSGSTNGRG). A compositionally biased stretch (basic residues) spans 84–102 (TSRRMRTASHSHSHTHGHG). 6 consecutive transmembrane segments (helical) span residues 141-161 (FIVILCAKLVIQHALGLAVAV), 187-207 (LHCAWLLLFLTSSSLLVFYTF), 217-237 (FFANATIDYHNFWEVLWSVGV), 240-260 (FILKFIFMGFKCLILLVPCPL), 270-290 (YMLIEEVGQLYQVIAPVPLWF), and 303-323 (VGLTLGILLALLYLIMKLLAL). The interval 352–403 (IREAGDICPICQADFKQPRVLVCQHIFCEECIAQWLNQERTCPLCRTVITDK) is required for ubiquitin ligase activity and for protection against ER stress-induced cell death. Residues 359 to 397 (CPICQADFKQPRVLVCQHIFCEECIAQWLNQERTCPLCR) form an RING-type zinc finger.

It is found in the endoplasmic reticulum membrane. It carries out the reaction S-ubiquitinyl-[E2 ubiquitin-conjugating enzyme]-L-cysteine + [acceptor protein]-L-lysine = [E2 ubiquitin-conjugating enzyme]-L-cysteine + N(6)-ubiquitinyl-[acceptor protein]-L-lysine.. Its pathway is protein modification; protein ubiquitination. E3 ubiquitin-protein ligase that acts in the endoplasmic reticulum (ER)-associated degradation (ERAD) pathway, which targets misfolded proteins that accumulate in the endoplasmic reticulum (ER) for ubiquitination and subsequent proteasome-mediated degradation. Protects cells from ER stress-induced apoptosis. The polypeptide is E3 ubiquitin-protein ligase RNFT1 (rnft1) (Danio rerio (Zebrafish)).